A 400-amino-acid chain; its full sequence is Sphingosine 1-phosphate receptor 5 (400 aa).

Topologically, residues 1–41 (MEPGLLRPAPVSEVIVLHYNYTGKLRGARYQPGAGLRADAA) are extracellular. Residue asparagine 20 is glycosylated (N-linked (GlcNAc...) asparagine). The helical transmembrane segment at 42-62 (VCLAVCAFIVLENLAVLLVLV) threads the bilayer. The Cytoplasmic segment spans residues 63 to 68 (RHPRFH). A helical membrane pass occupies residues 69–89 (APMFLLLGSLTLSDLLAGAAY). Residues 90–111 (ATNILLSGPLTLRLSPALWFAR) are Extracellular-facing. The chain crosses the membrane as a helical span at residues 112-132 (EGGVFVALAASVLSLLAIALE). Topologically, residues 133–151 (RHLTMARRGPAPAASRART) are cytoplasmic. Residues 152–172 (LAMAVAAWGASLLLGLLPALG) traverse the membrane as a helical segment. At 173–192 (WNCLGRLETCSTVLPLYAKA) the chain is on the extracellular side. The chain crosses the membrane as a helical span at residues 193-213 (YVLFCVLAFLGILAAICALYA). At 214-253 (RIYCQVRANARRLRAGPGSRRATSSSRSRHTPRSLALLRT) the chain is on the cytoplasmic side. The helical transmembrane segment at 254–274 (LSVVLLAFVACWGPLFLLLLL) threads the bilayer. Over 275–288 (DVACPARACPVLLQ) the chain is Extracellular. Residues 289 to 309 (ADPFLGLAMANSLLNPIIYTF) form a helical membrane-spanning segment. At 310 to 400 (TNRDLRHALL…NRSLVPTATD (91 aa)) the chain is on the cytoplasmic side. Residue cysteine 324 is the site of S-palmitoyl cysteine attachment. Positions 331–400 (QDSSNSLQRS…NRSLVPTATD (70 aa)) are disordered. A phosphoserine mark is found at serine 340, serine 342, and serine 384. A compositionally biased stretch (polar residues) spans 360–400 (DRSSSPSEHLSPQQDGVDTSCSTGSPGVATANRSLVPTATD).

This sequence belongs to the G-protein coupled receptor 1 family. Expressed in spleen and brain. In the CNS expression is restricted to oligodendrocytes.

It is found in the cell membrane. Its function is as follows. Receptor for the lysosphingolipid sphingosine 1-phosphate (S1P). S1P is a bioactive lysophospholipid that elicits diverse physiological effect on most types of cells and tissues. Is coupled to both the G(i/0)alpha and G(12) subclass of heteromeric G-proteins. S1P activation on oligodendroglial cells modulates two distinct functional pathways mediating either process retraction or cell survival. S1P activation on O4-positive pre-oligodendrocytes induces process retraction via a Rho kinase/collapsin response-mediated protein signaling pathway. The S1P-induced survival of mature oligodendrocytes is mediated through a pertussis toxin-sensitive, Akt-dependent pathway. S1P activation on oligodendroglial cells modulates two distinct functional pathways mediating either process retraction or cell survival. These effects depend on the developmental stage of the cell. This Mus musculus (Mouse) protein is Sphingosine 1-phosphate receptor 5 (S1pr5).